Reading from the N-terminus, the 419-residue chain is Adenylosuccinate synthetase (419 aa).

Residues 15-21 and 43-45 contribute to the GTP site; these read GDEGKGK and GHT. Asp-16 functions as the Proton acceptor in the catalytic mechanism. Mg(2+)-binding residues include Asp-16 and Gly-43. Residues 16–19, 41–44, Thr-128, Arg-142, Gln-223, Thr-238, and Arg-302 each bind IMP; these read DEGK and NAGH. His-44 serves as the catalytic Proton donor. A substrate-binding site is contributed by 298 to 304; that stretch reads TTTGRAR. GTP-binding positions include Arg-304, 330–332, and 408–410; these read KLD and STS.

The protein belongs to the adenylosuccinate synthetase family. In terms of assembly, homodimer. The cofactor is Mg(2+).

The protein localises to the cytoplasm. The catalysed reaction is IMP + L-aspartate + GTP = N(6)-(1,2-dicarboxyethyl)-AMP + GDP + phosphate + 2 H(+). Its pathway is purine metabolism; AMP biosynthesis via de novo pathway; AMP from IMP: step 1/2. In terms of biological role, plays an important role in the de novo pathway of purine nucleotide biosynthesis. Catalyzes the first committed step in the biosynthesis of AMP from IMP. This chain is Adenylosuccinate synthetase, found in Sulfurimonas denitrificans (strain ATCC 33889 / DSM 1251) (Thiomicrospira denitrificans (strain ATCC 33889 / DSM 1251)).